Consider the following 595-residue polypeptide: MRVAPEFYELLRNRINISDVVRQKVALTRKSGNYVGLCPFHQEKTPSFTVSDSKRFFYCFGCKAAGDVIKFTSNISGLSYNESAIKLATDYGIEIPKLTAKQKEFYEESDEILNILELANKFFRTQLTPEILNYLHERGITEETVKEFSIGFAPKNNKFEKFFHDKNIDIIKLGKAGLIGKRENGEIYNLFSNRITIPIRNIYNKIVGFGGRVLGEGLPKYLNSPETTVFQKSETLYGEHKAISSSYKKNHSILVEGYFDVIALHQAGFSEAVASLGTSVTENHLHKLWRAGDEIILCLDGDNAGIKASIRTINLALPLINSEKKISFIRLPNGLDPDDAVNKNGADFFAKLIDKRISLSEMIWHIEYSGKSFKTAEEKANLEKNLKDYCSKISDSNLKASYYRFFKEQIWQNLVTKQKKATTKNSNLAPIISSHGYSELEMLEHAFCALLVKFPIILEEKDIRDFILNLNFNNKSLEEFRNWYLNEIIDNNVEASEITAIVEKTSFFDIFLLLSKTDNLFLDISFNKNNIRLDLLWQWLHKKYYLINLQQEYSITINSTDNHDFEKVLLYKKEILKIANELQVLNESFINHTIT.

The CHC2-type zinc-finger motif lies at 38 to 62; the sequence is CPFHQEKTPSFTVSDSKRFFYCFGC. The region spanning 250 to 332 is the Toprim domain; that stretch reads NHSILVEGYF…EKKISFIRLP (83 aa). Positions 256, 300, and 302 each coordinate Mg(2+).

This sequence belongs to the DnaG primase family. In terms of assembly, monomer. Interacts with DnaB. Zn(2+) serves as cofactor. Requires Mg(2+) as cofactor.

It catalyses the reaction ssDNA + n NTP = ssDNA/pppN(pN)n-1 hybrid + (n-1) diphosphate.. Its function is as follows. RNA polymerase that catalyzes the synthesis of short RNA molecules used as primers for DNA polymerase during DNA replication. In Rickettsia felis (strain ATCC VR-1525 / URRWXCal2) (Rickettsia azadi), this protein is DNA primase.